A 178-amino-acid polypeptide reads, in one-letter code: Pyruvate synthase subunit PorC (178 aa).

As to quaternary structure, heterotetramer of one alpha, one beta, one delta and one gamma chain.

It carries out the reaction 2 oxidized [2Fe-2S]-[ferredoxin] + pyruvate + CoA = 2 reduced [2Fe-2S]-[ferredoxin] + acetyl-CoA + CO2 + H(+). The chain is Pyruvate synthase subunit PorC (porC) from Methanocaldococcus jannaschii (strain ATCC 43067 / DSM 2661 / JAL-1 / JCM 10045 / NBRC 100440) (Methanococcus jannaschii).